The primary structure comprises 155 residues: Ribosomal RNA large subunit methyltransferase H (155 aa).

Residues L73, G104, and 123-128 (ISKMTF) contribute to the S-adenosyl-L-methionine site.

This sequence belongs to the RNA methyltransferase RlmH family. Homodimer.

It is found in the cytoplasm. It carries out the reaction pseudouridine(1915) in 23S rRNA + S-adenosyl-L-methionine = N(3)-methylpseudouridine(1915) in 23S rRNA + S-adenosyl-L-homocysteine + H(+). In terms of biological role, specifically methylates the pseudouridine at position 1915 (m3Psi1915) in 23S rRNA. This Francisella philomiragia subsp. philomiragia (strain ATCC 25017 / CCUG 19701 / FSC 153 / O#319-036) protein is Ribosomal RNA large subunit methyltransferase H.